A 734-amino-acid polypeptide reads, in one-letter code: MATKFPKFSQGLAEDPTTRRIWYGIATAHDFESHDGMTEESLYQKIFASHFGQLAIIFLWTSGNLFHVAWQGNFEQWGQDPLHVRPIAHAIWDPHFGQPAVEAFTRGGAAGPVNISYSGVYQWWYTIGMRSSNDLYTGALFLLVGAAILLFAGWLHLQPKFQPSLSWFKNAESRLNHHLAGLFGVSSLAWTGHLVHVAIPESRGQHVGWDNFLTTLPHPAGLAPFFNGNWSVYAQNPDSASHLFGTSTGAGTAILTFLGGFHPQTQSLWLTDMAHHHLAIAVVFILAGHMYRTNFGIGHSMREILEAHRAPSGRLGLGHKGLFDTVNNSLHFQLGLALASLGVITSLVAQHMYSLPPYAFMAQDFTTMSALYTHHQYIAGFIMTGAFAHGAIFFIRDYDPIQNEGNVLARMLEHKEALISHLSWVTLFLGFHTLGLYVHNDVMLAFGTPEKQILIEPVFAQWIQASHGKALYGFDVLLSSADSPATSASQSIWLPGWLDAINSSSNSLFLTIGPGDFLVHHAIALGLHTTTLILVKGALDARGSKLMPDKKDFGYSFPCDGPGRGGTCDISAWDAFYLAVFWMLNTIGWTTFYWHWKHLALWQGNAAQFNESSTYLMGWLRDYLWLNSSQLINGYNPFGMNSLSVWAWMFLFGHLVWATGFMFLISWRGYWQELIETLAWAHERTPLANLVRWKDKPVALSIVQARLVGLAHFSVGYVFTYAAFVIASTSGKFG.

8 consecutive transmembrane segments (helical) span residues 46-69 (IFAS…FHVA), 135-158 (LYTG…LHLQ), 175-199 (LNHH…HVAI), 273-291 (MAHH…GHMY), 330-353 (LHFQ…QHMY), 369-395 (SALY…IFFI), 417-439 (ALIS…LYVH), and 517-535 (FLVH…LILV). Positions 559 and 568 each coordinate [4Fe-4S] cluster. Helical transmembrane passes span 575-596 (AFYL…YWHW) and 643-665 (LSVW…MFLI). Positions 654, 662, and 670 each coordinate chlorophyll a. Trp671 provides a ligand contact to phylloquinone. Residues 707–727 (LVGLAHFSVGYVFTYAAFVIA) form a helical membrane-spanning segment.

It belongs to the PsaA/PsaB family. As to quaternary structure, the PsaA/B heterodimer binds the P700 chlorophyll special pair and subsequent electron acceptors. PSI consists of a core antenna complex that captures photons, and an electron transfer chain that converts photonic excitation into a charge separation. The eukaryotic PSI reaction center is composed of at least 11 subunits. It depends on P700 is a chlorophyll a/chlorophyll a' dimer, A0 is one or more chlorophyll a, A1 is one or both phylloquinones and FX is a shared 4Fe-4S iron-sulfur center. as a cofactor.

It localises to the plastid. The protein resides in the chloroplast thylakoid membrane. The catalysed reaction is reduced [plastocyanin] + hnu + oxidized [2Fe-2S]-[ferredoxin] = oxidized [plastocyanin] + reduced [2Fe-2S]-[ferredoxin]. In terms of biological role, psaA and PsaB bind P700, the primary electron donor of photosystem I (PSI), as well as the electron acceptors A0, A1 and FX. PSI is a plastocyanin/cytochrome c6-ferredoxin oxidoreductase, converting photonic excitation into a charge separation, which transfers an electron from the donor P700 chlorophyll pair to the spectroscopically characterized acceptors A0, A1, FX, FA and FB in turn. Oxidized P700 is reduced on the lumenal side of the thylakoid membrane by plastocyanin or cytochrome c6. In Nephroselmis olivacea (Green alga), this protein is Photosystem I P700 chlorophyll a apoprotein A2.